The sequence spans 622 residues: 1-deoxy-D-xylulose-5-phosphate synthase (622 aa).

Residues histidine 80 and 121–123 (GHS) each bind thiamine diphosphate. Position 152 (aspartate 152) interacts with Mg(2+). Thiamine diphosphate-binding positions include 153–154 (GA), asparagine 181, tyrosine 288, and glutamate 370. Asparagine 181 contributes to the Mg(2+) binding site.

This sequence belongs to the transketolase family. DXPS subfamily. In terms of assembly, homodimer. Mg(2+) is required as a cofactor. Requires thiamine diphosphate as cofactor.

It catalyses the reaction D-glyceraldehyde 3-phosphate + pyruvate + H(+) = 1-deoxy-D-xylulose 5-phosphate + CO2. It functions in the pathway metabolic intermediate biosynthesis; 1-deoxy-D-xylulose 5-phosphate biosynthesis; 1-deoxy-D-xylulose 5-phosphate from D-glyceraldehyde 3-phosphate and pyruvate: step 1/1. Functionally, catalyzes the acyloin condensation reaction between C atoms 2 and 3 of pyruvate and glyceraldehyde 3-phosphate to yield 1-deoxy-D-xylulose-5-phosphate (DXP). The protein is 1-deoxy-D-xylulose-5-phosphate synthase of Shewanella loihica (strain ATCC BAA-1088 / PV-4).